We begin with the raw amino-acid sequence, 106 residues long: 1-deoxy-D-xylulose 5-phosphate reductoisomerase (106 aa).

Asp3 provides a ligand contact to Mn(2+). The 1-deoxy-D-xylulose 5-phosphate site is built by Ser4, Glu5, Ser29, His52, Ser65, Asn70, Lys71, and Glu74. Residue Glu5 participates in Mn(2+) binding. Glu74 lines the Mn(2+) pocket.

This sequence belongs to the DXR family. Mn(2+) serves as cofactor. The cofactor is Mg(2+).

It localises to the plastid. Its subcellular location is the chloroplast stroma. The enzyme catalyses 2-C-methyl-D-erythritol 4-phosphate + NADP(+) = 1-deoxy-D-xylulose 5-phosphate + NADPH + H(+). It participates in isoprenoid biosynthesis; isopentenyl diphosphate biosynthesis via DXP pathway; isopentenyl diphosphate from 1-deoxy-D-xylulose 5-phosphate: step 1/6. In terms of biological role, enzyme of the plastid non-mevalonate pathway for isoprenoid biosynthesis that catalyzes the NADPH-dependent rearrangement and reduction of 1-deoxy-D-xylulose-5-phosphate (DXP) to 2-C-methyl-D-erythritol 4-phosphate (MEP). Required for chloroplast development. This chain is 1-deoxy-D-xylulose 5-phosphate reductoisomerase, found in Origanum vulgare (Wild marjoram).